The chain runs to 302 residues: Ribosome-binding factor PSRP1, chloroplastic (302 aa).

The transit peptide at 1–66 (MATLCTSAIN…SRNKPNVVCM (66 aa)) directs the protein to the chloroplast.

As to quaternary structure, binds to the mRNA channel of the chloroplast small ribosomal subunit and interacts with 16S sRNA nucleotides at the A-site and P-site.

The protein localises to the plastid. Its subcellular location is the chloroplast stroma. Functionally, ribosome-binding factor involved in light- and temperature-dependent control of protein synthesis. Interacts with 16S sRNA nucleotides at the A-site and P-site, where it protects the decoding center and inhibits translation by preventing tRNA binding. Stabilizes 70S ribosomes against dissociation. May be recycled by the combined action of ribosome-recycling factor (RRF) and EF-G. This is Ribosome-binding factor PSRP1, chloroplastic (PSRP1) from Spinacia oleracea (Spinach).